The chain runs to 394 residues: NAD(P)H-quinone oxidoreductase subunit H (394 aa).

The protein belongs to the complex I 49 kDa subunit family. In terms of assembly, NDH-1 can be composed of about 15 different subunits; different subcomplexes with different compositions have been identified which probably have different functions.

The protein resides in the cellular thylakoid membrane. It catalyses the reaction a plastoquinone + NADH + (n+1) H(+)(in) = a plastoquinol + NAD(+) + n H(+)(out). The catalysed reaction is a plastoquinone + NADPH + (n+1) H(+)(in) = a plastoquinol + NADP(+) + n H(+)(out). Functionally, NDH-1 shuttles electrons from an unknown electron donor, via FMN and iron-sulfur (Fe-S) centers, to quinones in the respiratory and/or the photosynthetic chain. The immediate electron acceptor for the enzyme in this species is believed to be plastoquinone. Couples the redox reaction to proton translocation, and thus conserves the redox energy in a proton gradient. Cyanobacterial NDH-1 also plays a role in inorganic carbon-concentration. In Synechococcus sp. (strain CC9902), this protein is NAD(P)H-quinone oxidoreductase subunit H.